A 370-amino-acid polypeptide reads, in one-letter code: Proto-oncogene Wnt-1 (370 aa).

The first 27 residues, 1–27 (MGLWALLPGWVSATLLLALAALPAALA), serve as a signal peptide directing secretion. An N-linked (GlcNAc...) asparagine glycan is attached at Asn29. Disulfide bonds link Cys93–Cys104, Cys143–Cys151, Cys153–Cys170, Cys218–Cys232, Cys220–Cys227, Cys299–Cys330, Cys315–Cys325, Cys329–Cys369, Cys345–Cys360, Cys347–Cys357, and Cys352–Cys353. Residue Ser224 is the site of O-palmitoleoyl serine; by PORCN attachment. N-linked (GlcNAc...) asparagine glycans are attached at residues Asn316 and Asn346. Asn359 carries N-linked (GlcNAc...) asparagine glycosylation.

It belongs to the Wnt family. As to quaternary structure, forms a soluble 1:1 complex with AFM; this prevents oligomerization and is required for prolonged biological activity. The complex with AFM may represent the physiological form in body fluids. Interacts with PORCN. Interacts with RSPO1, RSPO2 and RSPO3. Interacts with WLS. Palmitoleoylation is required for efficient binding to frizzled receptors. Palmitoleoylation is necessary for proper trafficking to cell surface. Depalmitoleoylated by NOTUM, leading to inhibit Wnt signaling pathway.

The protein resides in the secreted. Its subcellular location is the extracellular space. It is found in the extracellular matrix. Functionally, ligand for members of the frizzled family of seven transmembrane receptors. Acts in the canonical Wnt signaling pathway by promoting beta-catenin-dependent transcriptional activation. In some developmental processes, is also a ligand for the coreceptor RYK, thus triggering Wnt signaling. Plays an essential role in the development of the embryonic brain and central nervous system (CNS). Has a role in osteoblast function, bone development and bone homeostasis. The chain is Proto-oncogene Wnt-1 (WNT1) from Homo sapiens (Human).